A 453-amino-acid chain; its full sequence is tRNA modification GTPase MnmE (453 aa).

Arg-22, Glu-79, and Lys-119 together coordinate (6S)-5-formyl-5,6,7,8-tetrahydrofolate. The TrmE-type G domain occupies 215-376 (GMKVVIAGRP…LRNHLKECMG (162 aa)). Asn-225 is a K(+) binding site. Residues 225–230 (NAGKSS), 244–250 (TDIAGTT), 269–272 (DTAG), and 334–337 (NKAD) each bind GTP. Ser-229 is a binding site for Mg(2+). Positions 244, 246, and 249 each coordinate K(+). A Mg(2+)-binding site is contributed by Thr-250. Lys-453 contacts (6S)-5-formyl-5,6,7,8-tetrahydrofolate.

The protein belongs to the TRAFAC class TrmE-Era-EngA-EngB-Septin-like GTPase superfamily. TrmE GTPase family. As to quaternary structure, homodimer. Heterotetramer of two MnmE and two MnmG subunits. K(+) serves as cofactor.

It is found in the cytoplasm. Its function is as follows. Exhibits a very high intrinsic GTPase hydrolysis rate. Involved in the addition of a carboxymethylaminomethyl (cmnm) group at the wobble position (U34) of certain tRNAs, forming tRNA-cmnm(5)s(2)U34. In Vibrio vulnificus (strain YJ016), this protein is tRNA modification GTPase MnmE.